A 676-amino-acid chain; its full sequence is Symportin 1 (676 aa).

The segment covering 1–10 (MGKTRRNRVR) has biased composition (basic residues). Positions 1–28 (MGKTRRNRVRNRTDPIAKPVKPPTDPEL) are disordered. The ARM 1 repeat unit spans residues 183 to 216 (TILRLLFRLISADIAPQDIYEEAISCLTTLSEDN). The segment at 325-385 (KGNQGSRESP…EDDEDDDDDS (61 aa)) is disordered. 2 stretches are compositionally biased toward acidic residues: residues 338-354 (ADEE…DAMD) and 363-385 (EDQE…DDDS). One copy of the ARM 2 repeat lies at 420 to 453 (TAVPQLIRLSNLPIDSDESLTIQSHALSALNNIS).

This sequence belongs to the nuclear import and ribosome assembly adapter family. As to quaternary structure, component of a hexameric 5S RNP precursor complex, composed of 5S RNA, RRS1, RPF2, RPL5, RPL11 and SYO1; this complex acts as a precursor for ribosome assembly.

In terms of biological role, involved in ribosomal large subunit assembly. The polypeptide is Symportin 1 (Chaetomium thermophilum (strain DSM 1495 / CBS 144.50 / IMI 039719) (Thermochaetoides thermophila)).